A 215-amino-acid polypeptide reads, in one-letter code: Penicillin-binding protein activator LpoB (215 aa).

The first 19 residues, 1 to 19, serve as a signal peptide directing secretion; it reads MMKMCRYALITALAIFLAG. Cys20 carries the N-palmitoyl cysteine lipid modification. Cys20 carries the S-diacylglycerol cysteine lipid modification. The disordered stretch occupies residues 28–78; the sequence is APVEEAKPQPQQPAQPQPTVPTVPAVPSVPAQPGPIEHQDQQSGQPAPRVR. Positions 37 to 48 are enriched in pro residues; it reads PQQPAQPQPTVP. Residues 49-58 are compositionally biased toward low complexity; that stretch reads TVPAVPSVPA.

This sequence belongs to the LpoB family. In terms of assembly, interacts with PBP1b.

Its subcellular location is the cell outer membrane. Its function is as follows. Regulator of peptidoglycan synthesis that is essential for the function of penicillin-binding protein 1B (PBP1b). In Klebsiella pneumoniae subsp. pneumoniae (strain ATCC 700721 / MGH 78578), this protein is Penicillin-binding protein activator LpoB.